Reading from the N-terminus, the 852-residue chain is MFFACYCALRTNVKKYRYQDEDGPHDHSLPRLTHEVRGPELVHVSEKNLSQIENVHGYVLQSHISPLKASPAPIIVNTDTLDTIPYVNGTEIEYEFEEITLERGNSGLGFSIAGGTDNPHIGDDPGIFITKIIPGGAAAEDGRLRVNDCILRVNEVDVSEVSHSKAVEALKEAGSIVRLYVRRRRPILETVVEIKLFKGPKGLGFSIAGGVGNQHIPGDNSIYVTKIIDGGAAQKDGRLQVGDRLLMVNNYSLEEVTHEEAVAILKNTSDVVYLKVGKPTTIYMTDPYGPPDITHSYSPPMENHLLSGNNGTLEYKTSLPPISPGRYSPIPKHMLVEDDYTRPPEPVYSTVNKLCDKPASPRHYSPVECDKSFLLSTPYPHYHLGLLPDSDMTSHSQHSTATRQPSVTLQRAISLEGEPRKVVLHKGSTGLGFNIVGGEDGEGIFVSFILAGGPADLSGELQRGDQILSVNGIDLRGASHEQAAAALKGAGQTVTIIAQYQPEDYARFEAKIHDLREQMMNHSMSSGSGSLRTNQKRSLYVRAMFDYDKSKDSGLPSQGLSFKYGDILHVINASDDEWWQARRVILDGDSEEMGVIPSKRRVERKERARLKTVKFNAKPGVIDSKGDIPGLGDDGYGTKTLRGQEDLILSYEPVTRQEINYTRPVIILGPMKDRINDDLISEFPDKFGSCVPHTTRPKRDYEVDGRDYHFVISREQMEKDIQEHKFIEAGQYNDNLYGTSVQSVRFVAERGKHCILDVSGNAIKRLQVAQLYPIAIFIKPKSLEPLMEMNKRLTEEQAKKTYDRAIKLEQEFGEYFTAIVQGDTLEDIYNQCKLVIEEQSGPFIWIPSKEKL.

2 S-palmitoyl cysteine lipidation sites follow: cysteine 5 and cysteine 7. Phosphoserine is present on serine 28. A Phosphotyrosine modification is found at tyrosine 58. A Phosphoserine modification is found at serine 65. PDZ domains lie at 98-184 (EITL…VRRR) and 193-279 (EIKL…VGKP). 6 positions are modified to phosphoserine: serine 307, serine 328, serine 360, serine 365, serine 406, and serine 414. The region spanning 421 to 501 (KVVLHKGSTG…QTVTIIAQYQ (81 aa)) is the PDZ 3 domain. Phosphotyrosine is present on tyrosine 505. Residues serine 528, serine 530, and serine 553 each carry the phosphoserine modification. In terms of domain architecture, SH3 spans 536 to 606 (KRSLYVRAMF…PSKRRVERKE (71 aa)). Residues 662 to 837 (TRPVIILGPM…IYNQCKLVIE (176 aa)) form the Guanylate kinase-like domain. 2 positions are modified to phosphotyrosine: tyrosine 732 and tyrosine 737.

Belongs to the MAGUK family. As to quaternary structure, interacts through its PDZ domains with NETO1. Interacts with NOS1/nNOS through second PDZ domain. Interacts with KCNJ2/Kir2.1 (via C-terminus) through one of its PDZ domains. Interacts with KCNJ4. Interacts with FRMPD4 (via C-terminus). Interacts with LRFN1. Interacts with LRFN2 and LRFN4. Interacts with FASLG. Interacts with ADAM22. Interacts with DGKI (via PDZ-binding motif). In terms of processing, palmitoylation of isoform 1 and isoform 2 is not required for targeting to postsynaptic density. Detected in juxtaparanodal zones in the central nervous system and at nerve terminal plexuses of basket cells in the cerebellum (at protein level). Brain. High levels in cerebellar Purkinje cells. Expressed in pyramidal cells of the Ammons's horn and granular cells of the dentate gyrus in the hippocampus as well as cerebral cortex and striatum. High levels in dorsal horn of spinal cord.

The protein resides in the cell membrane. It is found in the postsynaptic density. It localises to the synapse. Its subcellular location is the cell projection. The protein localises to the axon. The protein resides in the membrane. It is found in the perikaryon. Required for perception of chronic pain through NMDA receptor signaling. Regulates surface expression of NMDA receptors in dorsal horn neurons of the spinal cord. Interacts with the cytoplasmic tail of NMDA receptor subunits as well as inward rectifying potassium channels. Involved in regulation of synaptic stability at cholinergic synapses. Part of the postsynaptic protein scaffold of excitatory synapses. The chain is Disks large homolog 2 (Dlg2) from Rattus norvegicus (Rat).